A 140-amino-acid chain; its full sequence is Large-conductance mechanosensitive channel 2 (140 aa).

A run of 3 helical transmembrane segments spans residues 8-28 (FISK…AAFG), 30-50 (IVDS…FGGL), and 81-101 (GSFI…FLMV).

It belongs to the MscL family. Homopentamer.

The protein resides in the cell inner membrane. Channel that opens in response to stretch forces in the membrane lipid bilayer. May participate in the regulation of osmotic pressure changes within the cell. The polypeptide is Large-conductance mechanosensitive channel 2 (Mesorhizobium japonicum (strain LMG 29417 / CECT 9101 / MAFF 303099) (Mesorhizobium loti (strain MAFF 303099))).